The chain runs to 256 residues: Thiazole synthase (256 aa).

Lys-95 (schiff-base intermediate with DXP) is an active-site residue. Residues Gly-156, Ala-182–Gly-183, and Asn-204–Thr-205 contribute to the 1-deoxy-D-xylulose 5-phosphate site.

The protein belongs to the ThiG family. In terms of assembly, homotetramer. Forms heterodimers with either ThiH or ThiS.

It is found in the cytoplasm. The catalysed reaction is [ThiS sulfur-carrier protein]-C-terminal-Gly-aminoethanethioate + 2-iminoacetate + 1-deoxy-D-xylulose 5-phosphate = [ThiS sulfur-carrier protein]-C-terminal Gly-Gly + 2-[(2R,5Z)-2-carboxy-4-methylthiazol-5(2H)-ylidene]ethyl phosphate + 2 H2O + H(+). It functions in the pathway cofactor biosynthesis; thiamine diphosphate biosynthesis. In terms of biological role, catalyzes the rearrangement of 1-deoxy-D-xylulose 5-phosphate (DXP) to produce the thiazole phosphate moiety of thiamine. Sulfur is provided by the thiocarboxylate moiety of the carrier protein ThiS. In vitro, sulfur can be provided by H(2)S. The sequence is that of Thiazole synthase from Photobacterium profundum (strain SS9).